Consider the following 459-residue polypeptide: Lipase 4 (459 aa).

An N-terminal signal peptide occupies residues 1 to 14 (MLFLLFLLVAPIYA). Cys-110 and Cys-281 are joined by a disulfide. The active-site Charge relay system is the Ser-194. N-linked (GlcNAc...) asparagine glycans are attached at residues Asn-229 and Asn-266. Active-site charge relay system residues include Asp-343 and His-376. A disulfide bridge links Cys-359 with Cys-404.

It belongs to the AB hydrolase superfamily. Lipase family. Class Lip subfamily.

Its subcellular location is the secreted. The catalysed reaction is a triacylglycerol + H2O = a diacylglycerol + a fatty acid + H(+). Functionally, secreted lipase that is able to hydrolyze both the neutral triacylglycerols and the monopalmitate ester Tween 40, allowing the use of hydrolyzed products as carbon sources. Has broad lipolytic activity, which may be important for colonization and subsequent infection, therefore contributing to the persistence and virulence in human tissue. The polypeptide is Lipase 4 (Candida albicans (strain SC5314 / ATCC MYA-2876) (Yeast)).